A 489-amino-acid chain; its full sequence is MNGTMDHPDHPDSDSIKMFVGQVPRSWSEKELRELFEQYGAVYEINVLRDRSQNPPQSKGCCFITFYTRKAALEAQNALHNMKVLPGMHHPIQMKPADSEKNNAVEDRKLFIGMVSKKCNENDIRTLFSQFGQIEESRILRGPDGMSRGCAFITFTTRSMAQMAIKAMHQAQTMEGCSSPIVVKFADTQKDKEQKRMTQQLQQQMQQLNAASMWGNLAGLGSLAPQYLALLQQTTSSGNLNSLSGLHPMGGEYATGMTSGLNAMQLQNLATLAAAASAAQNTQSAGSALASSSSPLSILTSSGSSPNSNNSSINHMASLGALQTLAGATAGLNVGSLAGMAALNGGLGSSLSNGTGSTMEALSQAYSGIQQYAAAALPSLYNQSLLSQQGLGAAGSQKEGPEGANLFIYHLPQEFGDQDLLQMFMPFGNIVSAKVFIDKQTNLSKCFGFISYDNPVSAQAAIQSMNGFQIGMKRLKVQLKRSKNDSKPY.

RRM domains follow at residues 16–99, 108–188, and 404–482; these read IKMF…PADS, RKLF…FADT, and ANLF…LKRS.

It belongs to the CELF/BRUNOL family. Oligomer. Oligomerization is required for RNA-binding and EDEN-dependent deadenylation. Post-translationally, phosphorylated during oocyte maturation and dephosphorylated following egg activation. Dephosphorylation is calcium dependent and correlates with the increase in the activity of EDEN-dependent deadenylation.

It localises to the nucleus. The protein localises to the cytoplasm. RNA-binding protein implicated in the regulation of several post-transcriptional events. May be involved in pre-mRNA alternative splicing, mRNA translation activation and stability. Mediates the rapid and sequence-specific cytoplasmic deadenylation of EDEN-containing maternal mRNAs following fertilization. Binds to AU-rich sequences (AREs) of jun mRNA. Binds to the embryonic deadenylation element (EDEN) motif localized in the 3'-UTR of maternal mRNAs. Binds to RNA containing several repeats of the consensus sequence 5'-UGU-3'. EDEN-dependent deadenylation is enhanced by the presence of an additional cis element composed of three AUU repeats. The protein is CUGBP Elav-like family member 1-B (cugbp1-b) of Xenopus laevis (African clawed frog).